The primary structure comprises 590 residues: KNR4/SMI1 homolog 2 (590 aa).

Disordered stretches follow at residues 59–97 (SSSH…SNTN), 216–239 (FQHQ…ETHG), and 407–590 (TPQR…DVAL). Positions 71–85 (GSRTSLSRNGSSTTV) are enriched in polar residues. A compositionally biased stretch (low complexity) spans 217–226 (QHQQQQQQHQ). Polar residues predominate over residues 430–454 (PSMSGATANTNKSQNPLINMESSSK). Basic and acidic residues-rich tracts occupy residues 470–481 (PEEPVKKSEVKS) and 489–515 (EPEK…AKED). The span at 516–528 (DKEEEEEEQEEEK) shows a compositional bias: acidic residues. Residues 554-568 (TQKKNQSKKAKKQQQ) are compositionally biased toward basic residues. Residues 576–590 (NDVEEVAEDLNDVAL) show a composition bias toward acidic residues.

It belongs to the KNR4/SMI1 family.

The sequence is that of KNR4/SMI1 homolog 2 from Debaryomyces hansenii (strain ATCC 36239 / CBS 767 / BCRC 21394 / JCM 1990 / NBRC 0083 / IGC 2968) (Yeast).